The sequence spans 83 residues: MVTIRLARGGAKKRPFYNIVVTDSRNARDGRFIERVGFFNPLAKGQEETLRLDLDRVDHWVGNGASTTDRVAKLIKDARKAAA.

Belongs to the bacterial ribosomal protein bS16 family.

The chain is Small ribosomal subunit protein bS16 from Shewanella amazonensis (strain ATCC BAA-1098 / SB2B).